Here is a 342-residue protein sequence, read N- to C-terminus: MLKIAVYIVSLFTFLEAHVTTRNNQRIEPLSDEMISFINEHPDAGWKADKSDRFHSLDDARILMGARKEDAEMKRNRRPTVDHHDLNVEIPSQFDSRKKWPHCKSISQIRDQSRCGSCWAFGAVEAMTDRICIQSGGGQSAELSALDLISCCKDCGDGCQGGFPGVAWDYWVKRGIVTGGSKENHTGCQPYPFPKCEHHTKGKYPACGTKIYKTPQCKQTCQKGYKTPYEQDKHYGDESYNVQNNEKVIQRDIMMYGPVEAAFDVYEDFLNYKSGIYRHVTGSIVGGHAIRIIGWGVEKRTPYWLIANSWNEDWGEKGLFRMVRGRDECSIESDVVAGLIKT.

A signal peptide spans 1 to 17 (MLKIAVYIVSLFTFLEA). Residues 18-89 (HVTTRNNQRI…TVDHHDLNVE (72 aa)) constitute a propeptide, activation peptide. Disulfide bonds link Cys103-Cys132, Cys115-Cys159, Cys151-Cys217, Cys152-Cys155, Cys188-Cys221, and Cys196-Cys207. The active site involves Cys118. Active-site residues include His288 and Asn308.

This sequence belongs to the peptidase C1 family. In terms of tissue distribution, intestine (gut).

In terms of biological role, thiol protease. Has a role as a digestive enzyme. In Schistosoma japonicum (Blood fluke), this protein is Cathepsin B-like cysteine proteinase (CATB).